The chain runs to 1392 residues: Ankyrin repeat domain-containing protein 30B (1392 aa).

The tract at residues 1-21 (MKRLLAAAGKGVRGPEPPNPF) is disordered. ANK repeat units follow at residues 72 to 101 (KKRT…QLNV), 105 to 134 (EGRT…DLNY), 138 to 167 (YGNT…VIEV), 171 to 200 (ASLT…NANA), and 204 to 233 (SKCT…DVFA). 6 disordered regions span residues 265 to 292 (PKNP…ERTP), 558 to 587 (AQMF…VSQK), 636 to 656 (DRET…PTCG), 671 to 690 (RETL…PTCG), 830 to 877 (KEGA…SDSE), and 904 to 926 (GKIE…QNSV). Polar residues-rich tracts occupy residues 267–280 (NPQN…STGT) and 576–586 (DSESPCETVSQ). The span at 636 to 650 (DRETFKAESPDKDGL) shows a compositional bias: basic and acidic residues. Residues 830–840 (KEGATKTVTGQ) show a composition bias toward polar residues. 2 stretches are compositionally biased toward basic and acidic residues: residues 864 to 874 (LGRKEDTKSTS) and 904 to 915 (GKIEESPEKPSH). Coiled coils occupy residues 960–1168 (RELK…KQDK) and 1270–1318 (ETQC…QQLV).

As to expression, expressed in brain, breast and testis.

In Homo sapiens (Human), this protein is Ankyrin repeat domain-containing protein 30B (ANKRD30B).